The following is a 329-amino-acid chain: Prostaglandin reductase 1 (329 aa).

T18 is subject to Phosphothreonine. NADP(+)-binding positions include 152 to 155, K178, Y193, N217, 239 to 245, 270 to 272, and N321; these read GAVG, CGAISQY, and FIV. K178 is subject to N6-(2-hydroxyisobutyryl)lysine; alternate. K178 is subject to N6-acetyllysine; alternate.

It belongs to the NADP-dependent oxidoreductase L4BD family. As to quaternary structure, monomer or homodimer.

It is found in the cytoplasm. The catalysed reaction is 13,14-dihydro-15-oxo-prostaglandin E1 + NADP(+) = 15-oxoprostaglandin E1 + NADPH + H(+). The enzyme catalyses 13,14-dihydro-15-oxo-prostaglandin E2 + NADP(+) = 15-oxoprostaglandin E2 + NADPH + H(+). It carries out the reaction 13,14-dihydro-15-oxo-prostaglandin F1alpha + NADP(+) = 15-oxoprostaglandin F1alpha + NADPH + H(+). It catalyses the reaction 13,14-dihydro-15-oxo-PGF2alpha + NADP(+) = 15-oxoprostaglandin F2alpha + NADPH + H(+). The catalysed reaction is leukotriene B4 + NADP(+) = 12-oxo-leukotriene B4 + NADPH + H(+). The enzyme catalyses 20-hydroxy-leukotriene B4 + NADP(+) = 12-oxo-20-hydroxy-leukotriene B4 + NADPH + H(+). It carries out the reaction 6-trans-leukotriene B4 + NADP(+) = 12-oxo-(5S)-hydroxy-(6E,8E,10E,14Z)-eicosatetraenoate + NADPH + H(+). It catalyses the reaction (5S,12S)-dihydroxy-(6E,10E,12E,14Z)-eicosatetraenoate + NADP(+) = 12-oxo-(5S)-hydroxy-(6E,8E,10E,14Z)-eicosatetraenoate + NADPH + H(+). The catalysed reaction is an n-alkanal + NADP(+) = an alk-2-enal + NADPH + H(+). The enzyme catalyses hexanal + NADP(+) = (E)-hex-2-enal + NADPH + H(+). It carries out the reaction octanal + NADP(+) = (2E)-octenal + NADPH + H(+). It catalyses the reaction decanal + NADP(+) = (2E)-decenal + NADPH + H(+). The catalysed reaction is dodecanal + NADP(+) = (2E)-dodecenal + NADPH + H(+). The enzyme catalyses 4-hydroxynonanal + NADP(+) = (E)-4-hydroxynon-2-enal + NADPH + H(+). It carries out the reaction pentan-2-one + NADP(+) = (E)-pent-3-en-2-one + NADPH + H(+). It catalyses the reaction nonan-2-one + NADP(+) = (3E)-nonen-2-one + NADPH + H(+). Functionally, NAD(P)H-dependent oxidoreductase involved in metabolic inactivation of pro- and anti-inflammatory eicosanoids: prostaglandins (PG), leukotrienes (LT) and lipoxins (LX). Catalyzes with high efficiency the reduction of the 13,14 double bond of 15-oxoPGs, including 15-oxo-PGE1, 15-oxo-PGE2, 15-oxo-PGF1-alpha and 15-oxo-PGF2-alpha. Catalyzes with lower efficiency the oxidation of the hydroxyl group at C12 of LTB4 and its derivatives, converting them into biologically less active 12-oxo-LTB4 metabolites. Reduces 15-oxo-LXA4 to 13,14 dihydro-15-oxo-LXA4, enhancing neutrophil recruitment at the inflammatory site. Plays a role in metabolic detoxification of alkenals and ketones. Reduces alpha,beta-unsaturated alkenals and ketones, particularly those with medium-chain length, showing highest affinity toward (2E)-decenal and (3E)-3-nonen-2-one. May inactivate 4-hydroxy-2-nonenal, a cytotoxic lipid constituent of oxidized low-density lipoprotein particles. In Mus musculus (Mouse), this protein is Prostaglandin reductase 1 (Ptgr1).